A 338-amino-acid chain; its full sequence is Probable dual-specificity RNA methyltransferase RlmN (338 aa).

The active-site Proton acceptor is the glutamate 89. The region spanning 95-325 (HNYGMSACVT…AILRKEQGHD (231 aa)) is the Radical SAM core domain. The cysteines at positions 102 and 330 are disulfide-linked. Residues cysteine 109, cysteine 113, and cysteine 116 each coordinate [4Fe-4S] cluster. Residues 156 to 157 (GE), serine 188, 211 to 213 (SLH), and asparagine 287 each bind S-adenosyl-L-methionine. Catalysis depends on cysteine 330, which acts as the S-methylcysteine intermediate.

It belongs to the radical SAM superfamily. RlmN family. Requires [4Fe-4S] cluster as cofactor.

It localises to the cytoplasm. The catalysed reaction is adenosine(2503) in 23S rRNA + 2 reduced [2Fe-2S]-[ferredoxin] + 2 S-adenosyl-L-methionine = 2-methyladenosine(2503) in 23S rRNA + 5'-deoxyadenosine + L-methionine + 2 oxidized [2Fe-2S]-[ferredoxin] + S-adenosyl-L-homocysteine. It carries out the reaction adenosine(37) in tRNA + 2 reduced [2Fe-2S]-[ferredoxin] + 2 S-adenosyl-L-methionine = 2-methyladenosine(37) in tRNA + 5'-deoxyadenosine + L-methionine + 2 oxidized [2Fe-2S]-[ferredoxin] + S-adenosyl-L-homocysteine. Specifically methylates position 2 of adenine 2503 in 23S rRNA and position 2 of adenine 37 in tRNAs. In Acholeplasma laidlawii (strain PG-8A), this protein is Probable dual-specificity RNA methyltransferase RlmN.